A 153-amino-acid chain; its full sequence is Pheromone-binding protein Gp-9 (153 aa).

The N-terminal stretch at 1–19 (MKTFVLHIFIFALVAFASA) is a signal peptide. Disulfide bonds link Cys-37-Cys-77, Cys-73-Cys-129, and Cys-118-Cys-138.

It belongs to the PBP/GOBP family. Homodimer.

It is found in the secreted. In terms of biological role, colony queen number, a major feature of social organization, is associated with worker genotype for Gp-9. Colonies are headed by either a single reproductive queen (monogyne form) or multiple queens (polygyne form). Differences in worker Gp-9 genotypes between social forms may cause differences in workers' abilities to recognize queens and regulate their numbers. The chain is Pheromone-binding protein Gp-9 from Solenopsis sp. (strain B0-153) (Fire ant).